Consider the following 354-residue polypeptide: NADH-quinone oxidoreductase subunit H 2 (354 aa).

8 consecutive transmembrane segments (helical) span residues 4-24 (IALF…VLLT), 81-101 (ILAP…VPFG), 130-150 (IGLL…ALAG), 170-190 (VSYE…SGSF), 201-221 (GGFW…FIYL), 269-289 (VACI…PGFL), 296-316 (LVPV…YIWV), and 333-353 (WKFL…FVAL).

The protein belongs to the complex I subunit 1 family. NDH-1 is composed of 14 different subunits. Subunits NuoA, H, J, K, L, M, N constitute the membrane sector of the complex.

It is found in the cell inner membrane. The enzyme catalyses a quinone + NADH + 5 H(+)(in) = a quinol + NAD(+) + 4 H(+)(out). In terms of biological role, NDH-1 shuttles electrons from NADH, via FMN and iron-sulfur (Fe-S) centers, to quinones in the respiratory chain. The immediate electron acceptor for the enzyme in this species is believed to be ubiquinone. Couples the redox reaction to proton translocation (for every two electrons transferred, four hydrogen ions are translocated across the cytoplasmic membrane), and thus conserves the redox energy in a proton gradient. This subunit may bind ubiquinone. This Koribacter versatilis (strain Ellin345) protein is NADH-quinone oxidoreductase subunit H 2.